The primary structure comprises 213 residues: Imidazole glycerol phosphate synthase subunit HisH (213 aa).

One can recognise a Glutamine amidotransferase type-1 domain in the interval Ser4 to Pro213. Residue Cys83 is the Nucleophile of the active site. Active-site residues include His193 and Glu195.

Heterodimer of HisH and HisF.

Its subcellular location is the cytoplasm. The catalysed reaction is 5-[(5-phospho-1-deoxy-D-ribulos-1-ylimino)methylamino]-1-(5-phospho-beta-D-ribosyl)imidazole-4-carboxamide + L-glutamine = D-erythro-1-(imidazol-4-yl)glycerol 3-phosphate + 5-amino-1-(5-phospho-beta-D-ribosyl)imidazole-4-carboxamide + L-glutamate + H(+). It catalyses the reaction L-glutamine + H2O = L-glutamate + NH4(+). It participates in amino-acid biosynthesis; L-histidine biosynthesis; L-histidine from 5-phospho-alpha-D-ribose 1-diphosphate: step 5/9. IGPS catalyzes the conversion of PRFAR and glutamine to IGP, AICAR and glutamate. The HisH subunit catalyzes the hydrolysis of glutamine to glutamate and ammonia as part of the synthesis of IGP and AICAR. The resulting ammonia molecule is channeled to the active site of HisF. This is Imidazole glycerol phosphate synthase subunit HisH from Burkholderia lata (strain ATCC 17760 / DSM 23089 / LMG 22485 / NCIMB 9086 / R18194 / 383).